The primary structure comprises 163 residues: Phospholipase A2 homolog 3 (163 aa).

The signal sequence occupies residues 1-43; the sequence is MARGGSFSRLRLRAGVVVAAAAAALLLFAVVAPPAAALNIGLQ. Disulfide bonds link Cys-55/Cys-83, Cys-59/Cys-89, Cys-64/Cys-137, Cys-76/Cys-96, Cys-95/Cys-121, and Cys-102/Cys-114. The Ca(2+) site is built by Tyr-75, Gly-77, and Tyr-80. His-99 is an active-site residue. Asp-100 contacts Ca(2+).

It belongs to the phospholipase A2 family. It depends on Ca(2+) as a cofactor.

It is found in the secreted. It catalyses the reaction a 1,2-diacyl-sn-glycero-3-phosphocholine + H2O = a 1-acyl-sn-glycero-3-phosphocholine + a fatty acid + H(+). Its activity is regulated as follows. Inhibited by EGTA. In terms of biological role, PA2 catalyzes the calcium-dependent hydrolysis of the 2-acyl groups in 3-sn-phosphoglycerides. Releases lysophospholipids (LPLs) and free fatty acids (FFAs) from membrane phospholipids in response to hormones and other external stimuli. The polypeptide is Phospholipase A2 homolog 3 (PLA2-III) (Oryza sativa subsp. japonica (Rice)).